A 174-amino-acid chain; its full sequence is Elongation factor Tu, mitochondrial (174 aa).

62–66 is a binding site for GTP; it reads DCPGH. K78 carries the post-translational modification N6-succinyllysine. Phosphothreonine is present on T103. Phosphoserine is present on S121. N6-acetyllysine is present on K161.

Belongs to the GTP-binding elongation factor family. EF-Tu/EF-1A subfamily.

The protein resides in the mitochondrion. It catalyses the reaction GTP + H2O = GDP + phosphate + H(+). In terms of biological role, GTP hydrolase that promotes the GTP-dependent binding of aminoacyl-tRNA to the A-site of ribosomes during protein biosynthesis. This chain is Elongation factor Tu, mitochondrial, found in Mesocricetus auratus (Golden hamster).